The sequence spans 179 residues: D-glycero-beta-D-manno-heptose-1,7-bisphosphate 7-phosphatase (179 aa).

Residue Asp7 is the Nucleophile of the active site. Residues Asp7 and Asp9 each coordinate Mg(2+). Asp7 serves as a coordination point for substrate. The active-site Proton donor is Asp9. Residues 15 to 19 (DSDAF), 50 to 53 (TNQS), and Arg57 contribute to the substrate site. Zn(2+)-binding residues include Cys89, His91, Cys97, and Cys99. Arg100 contributes to the substrate binding site. Residue Asp126 coordinates Mg(2+). Position 129 (Arg129) interacts with substrate.

Monomer. Mg(2+) is required as a cofactor. It depends on Zn(2+) as a cofactor.

Its subcellular location is the cytoplasm. The catalysed reaction is D-glycero-beta-D-manno-heptose 1,7-bisphosphate + H2O = D-glycero-beta-D-manno-heptose 1-phosphate + phosphate. It participates in nucleotide-sugar biosynthesis; ADP-L-glycero-beta-D-manno-heptose biosynthesis; ADP-L-glycero-beta-D-manno-heptose from D-glycero-beta-D-manno-heptose 7-phosphate: step 2/4. It functions in the pathway bacterial outer membrane biogenesis; LPS core biosynthesis. In terms of biological role, converts the D-glycero-beta-D-manno-heptose 1,7-bisphosphate (beta-HBP) intermediate into D-glycero-beta-D-manno-heptose 1-phosphate by removing the phosphate group at the C-7 position. The polypeptide is D-glycero-beta-D-manno-heptose-1,7-bisphosphate 7-phosphatase (Bordetella bronchiseptica (strain ATCC BAA-588 / NCTC 13252 / RB50) (Alcaligenes bronchisepticus)).